We begin with the raw amino-acid sequence, 378 residues long: Alkaline elastase YaB (378 aa).

Positions 1 to 27 are cleaved as a signal peptide; it reads MNKKMGKIVAGTALIISVAFSSSIAQA. The propeptide occupies 28–110; it reads AEEAKEKYLI…IEEDAEVTTM (83 aa). Residue Gln111 coordinates Ca(2+). The Peptidase S8 domain maps to 114-377; the sequence is PWGINRVQAP…SGLVNAEAAT (264 aa). Asp141 functions as the Charge relay system in the catalytic mechanism. Asp149 provides a ligand contact to Ca(2+). His171 serves as the catalytic Charge relay system. Residues Leu182, Asn184, Ile186, Val188, Ala272, Tyr274, and Ala277 each contribute to the Ca(2+) site. Residue Ser324 is the Charge relay system of the active site.

Belongs to the peptidase S8 family. Requires Ca(2+) as cofactor.

The protein localises to the secreted. In terms of biological role, digests elastin efficiently, has a substrate preference for Ala in P1 position. The sequence is that of Alkaline elastase YaB (ale) from Bacillus sp. (strain YaB).